The chain runs to 560 residues: Phosphoglucomutase 1 (560 aa).

Positions 24 and 116 each coordinate alpha-D-glucose 1,6-bisphosphate. Catalysis depends on Ser116, which acts as the Phosphoserine intermediate. Residues Ser116, Asp288, Asp290, and Asp292 each coordinate Mg(2+). A Phosphoserine modification is found at Ser116. 6 residues coordinate alpha-D-glucose 1,6-bisphosphate: Asp292, Arg293, Thr357, Glu376, Ser378, and Lys389.

This sequence belongs to the phosphohexose mutase family. In terms of assembly, monomer. Mg(2+) serves as cofactor. As to expression, localized primarily to fat bodies in third instar larvae.

It catalyses the reaction alpha-D-glucose 1-phosphate = alpha-D-glucose 6-phosphate. The catalysed reaction is O-phospho-L-seryl-[protein] + alpha-D-glucose 1-phosphate = alpha-D-glucose 1,6-bisphosphate + L-seryl-[protein]. The enzyme catalyses alpha-D-glucose 1,6-bisphosphate + L-seryl-[protein] = O-phospho-L-seryl-[protein] + alpha-D-glucose 6-phosphate. Its function is as follows. Catalyzes the reversible isomerization of alpha-D-glucose 1-phosphate to alpha-D-glucose 6-phosphate. The mechanism proceeds via the intermediate compound alpha-D-glucose 1,6-bisphosphate. This enzyme participates in both the breakdown and synthesis of glucose. Enzyme of the glycolytic pathway. Glycolysis is essential in glial cells but not in neurons; neurons rely on the citric acid cycle for their energy needs, and on lactate and alanine secreted into the hemolymph by glial cells to fuel it. The sequence is that of Phosphoglucomutase 1 from Drosophila melanogaster (Fruit fly).